A 181-amino-acid polypeptide reads, in one-letter code: Der GTPase-activating protein YihI (181 aa).

The tract at residues 1 to 73 is disordered; that stretch reads MSRIKKARKP…DPRIGSKKPI (73 aa). A compositionally biased stretch (basic and acidic residues) spans 22-32; it reads NRTDRDVESRE. The segment covering 33–42 has biased composition (basic residues); it reads IKRKRKRKGL. The span at 55 to 67 shows a compositional bias: basic and acidic residues; it reads QARRNAQKKDPRI.

It belongs to the YihI family. In terms of assembly, interacts with Der.

Its function is as follows. A GTPase-activating protein (GAP) that modifies Der/EngA GTPase function. May play a role in ribosome biogenesis. The sequence is that of Der GTPase-activating protein YihI from Aliivibrio fischeri (strain ATCC 700601 / ES114) (Vibrio fischeri).